We begin with the raw amino-acid sequence, 206 residues long: Recombination protein RecR (206 aa).

The C4-type zinc finger occupies 58-73; sequence CENCHNISDTKVCEIC. Positions 81 to 176 constitute a Toprim domain; sequence QTICVVEDIR…IISTIARGIS (96 aa).

This sequence belongs to the RecR family.

In terms of biological role, may play a role in DNA repair. It seems to be involved in an RecBC-independent recombinational process of DNA repair. It may act with RecF and RecO. The chain is Recombination protein RecR from Flavobacterium johnsoniae (strain ATCC 17061 / DSM 2064 / JCM 8514 / BCRC 14874 / CCUG 350202 / NBRC 14942 / NCIMB 11054 / UW101) (Cytophaga johnsonae).